A 285-amino-acid chain; its full sequence is NAD kinase (285 aa).

The Proton acceptor role is filled by Asp66. Residues 66-67 (DG), 137-138 (ND), Arg148, Arg165, Asp167, and 178-183 (TAYSLS) each bind NAD(+).

It belongs to the NAD kinase family. Requires a divalent metal cation as cofactor.

It localises to the cytoplasm. The enzyme catalyses NAD(+) + ATP = ADP + NADP(+) + H(+). In terms of biological role, involved in the regulation of the intracellular balance of NAD and NADP, and is a key enzyme in the biosynthesis of NADP. Catalyzes specifically the phosphorylation on 2'-hydroxyl of the adenosine moiety of NAD to yield NADP. The protein is NAD kinase of Prosthecochloris aestuarii (strain DSM 271 / SK 413).